We begin with the raw amino-acid sequence, 74 residues long: Insertion element IS986 uncharacterized 8.2 kDa protein (74 aa).

This Mycobacterium tuberculosis protein is Insertion element IS986 uncharacterized 8.2 kDa protein.